We begin with the raw amino-acid sequence, 72 residues long: MSLKVDCPTCGTPVEWSPLSQFRPFCSDRCRLIDLGEWFSEERSIAGEEHTPSSDTARPQLSAEDLALLEQD.

Positions 7, 10, 26, and 30 each coordinate Zn(2+). Positions 44 to 72 are disordered; that stretch reads SIAGEEHTPSSDTARPQLSAEDLALLEQD.

The protein belongs to the DNA gyrase inhibitor YacG family. Interacts with GyrB. It depends on Zn(2+) as a cofactor.

Inhibits all the catalytic activities of DNA gyrase by preventing its interaction with DNA. Acts by binding directly to the C-terminal domain of GyrB, which probably disrupts DNA binding by the gyrase. The sequence is that of DNA gyrase inhibitor YacG from Tolumonas auensis (strain DSM 9187 / NBRC 110442 / TA 4).